Consider the following 156-residue polypeptide: Movement protein P17 (156 aa).

A homodimerization region spans residues 38–54; sequence AEDAEEEAIAAQEELEF. Disordered regions lie at residues 55-80 and 106-156; these read PEDEAQARHSCLQRTTSWATPKEVSP and ASYF…IKRG. An RNA-binding region spans residues 57–156; that stretch reads DEAQARHSCL…RAAPKLIKRG (100 aa). S71, S79, S137, and S140 each carry phosphoserine. A compositionally biased stretch (basic residues) spans 144-156; that stretch reads KLRRAAPKLIKRG.

It belongs to the polerovirus movement protein family. Homodimer. In terms of processing, expressed as a nonphosphorylated 20kDa form and a phosphorylated 22kDa form. Phosphorylated by a host PKC-related kinase. Serine phosphorylation is required for plamodesma targeting.

Its subcellular location is the host cell junction. The protein localises to the host plasmodesma. It is found in the host chloroplast envelope. It localises to the host Golgi apparatus. The protein resides in the host mitochondrion outer membrane. Together with movement protein P3a, facilitates long-distance movement of virions in host. Transports viral genome to neighboring plant cells directly through plasmosdesmata, without any budding. The movement protein allows efficient cell to cell propagation, by bypassing the host cell wall barrier. Binds ssRNA. The protein is Movement protein P17 of Potato leafroll virus (strain Potato/Canada/Rowhani/1979) (PLrV).